The sequence spans 358 residues: Glucose 1-dehydrogenase (358 aa).

Zn(2+) is bound at residue Cys-38. Thr-40 provides a ligand contact to substrate. Residues His-65, Glu-66, Cys-92, Cys-95, Cys-98, and Cys-106 each contribute to the Zn(2+) site. Positions 113, 149, and 153 each coordinate substrate. Residue Glu-149 coordinates Zn(2+). NADP(+) contacts are provided by residues 187–190 (SGPI), 209–211 (NRR), 268–270 (FGT), 296–298 (SVN), and Lys-342. Asn-298 is a binding site for substrate.

The protein belongs to the zinc-containing alcohol dehydrogenase family. Glucose 1-dehydrogenase subfamily. Requires Zn(2+) as cofactor.

It catalyses the reaction D-glucose + NAD(+) = D-glucono-1,5-lactone + NADH + H(+). The catalysed reaction is D-glucose + NADP(+) = D-glucono-1,5-lactone + NADPH + H(+). Catalyzes the NAD(P)(+)-dependent oxidation of D-glucose to D-gluconate via gluconolactone. Can utilize both NAD(+) and NADP(+) as electron acceptor. Is involved in the degradation of glucose through a non-phosphorylative variant of the Entner-Doudoroff pathway. In Metallosphaera sedula (strain ATCC 51363 / DSM 5348 / JCM 9185 / NBRC 15509 / TH2), this protein is Glucose 1-dehydrogenase.